We begin with the raw amino-acid sequence, 288 residues long: UTP--glucose-1-phosphate uridylyltransferase (288 aa).

This sequence belongs to the UDPGP type 2 family.

It catalyses the reaction alpha-D-glucose 1-phosphate + UTP + H(+) = UDP-alpha-D-glucose + diphosphate. Its pathway is glycolipid metabolism; diglucosyl-diacylglycerol biosynthesis. Its function is as follows. Catalyzes the formation of UDP-glucose from glucose-1-phosphate and UTP. This is an intermediate step in the biosynthesis of diglucosyl-diacylglycerol (Glc2-DAG), i.e. a glycolipid found in the membrane, which is also used as a membrane anchor for lipoteichoic acid (LTA). This chain is UTP--glucose-1-phosphate uridylyltransferase (gtaB), found in Staphylococcus haemolyticus (strain JCSC1435).